Here is a 120-residue protein sequence, read N- to C-terminus: Large ribosomal subunit protein uL18 (120 aa).

This sequence belongs to the universal ribosomal protein uL18 family. In terms of assembly, part of the 50S ribosomal subunit; part of the 5S rRNA/L5/L18/L25 subcomplex. Contacts the 5S and 23S rRNAs.

Functionally, this is one of the proteins that bind and probably mediate the attachment of the 5S RNA into the large ribosomal subunit, where it forms part of the central protuberance. This chain is Large ribosomal subunit protein uL18, found in Rhodopseudomonas palustris (strain HaA2).